The sequence spans 93 residues: Microcin N immunity protein (93 aa).

A run of 3 helical transmembrane segments spans residues 3–23 (FLNF…FIVW), 36–56 (LSII…NYKI), and 68–88 (LFCF…YFIL).

Belongs to the MceB microcin immunity protein family.

It is found in the cell inner membrane. Probably able to protect the producing cell against microcin N (microcin 24). This chain is Microcin N immunity protein, found in Escherichia coli.